The chain runs to 1634 residues: Leucine-rich repeat-containing protein 37A3 (1634 aa).

Positions 1 to 35 (MTSAQCPALACVMSPLRFWGPWPLLMWQLLWLLVK) are cleaved as a signal peptide. The Extracellular portion of the chain corresponds to 36–1581 (EAQPLEWVKD…ELPGYGYTKK (1546 aa)). Disordered stretches follow at residues 53–104 (PLGP…ESTE), 129–154 (SQQD…KKDP), 172–531 (TPQS…VVVA), 619–642 (PEPT…KHPE), and 758–777 (EPTT…APRP). An LRR 1 repeat occupies 137–160 (LSPQERLPVSPKKLKKDPAQRWSL). Composition is skewed to polar residues over residues 172 to 189 (TPQS…STDT) and 223 to 237 (ETQN…QSSS). LRR repeat units lie at residues 230–253 (LEDI…LEEE) and 267–290 (ESSM…EDQA). The segment covering 238-249 (LQQEAPAQLPQL) has biased composition (low complexity). N-linked (GlcNAc...) asparagine glycosylation is present at N296. Residues 307-326 (TITSEPTNETESSQAQQETP) show a composition bias toward polar residues. Residues 358–368 (SEQQQPVQPSE) show a composition bias toward low complexity. Residues 433–446 (LVHQEATTRLSGSG) are compositionally biased toward polar residues. Over residues 482–493 (SPEPINNENPSP) the composition is skewed to low complexity. Positions 760-770 (TTETGHSTALE) are enriched in polar residues. 6 LRR repeats span residues 864–887 (NGTF…VWKA), 888–911 (YSWT…SFEG), 912–935 (LLSL…TFEP), 937–959 (PFLK…TFQA), 963–987 (MQFL…LFKL), and 1002–1027 (LTTL…MACC). An N-linked (GlcNAc...) asparagine glycan is attached at N1079. LRR repeat units follow at residues 1124–1146 (LPYF…KLPT) and 1151–1176 (LAKI…SIQK). Basic and acidic residues-rich tracts occupy residues 1181 to 1191 (EVGRQSIRREQ) and 1201 to 1216 (AEEK…ELKQ). Disordered regions lie at residues 1181 to 1227 (EVGR…EKLA) and 1306 to 1329 (RFHK…KVRK). One copy of the LRR 12 repeat lies at 1359–1384 (FSSLRDLSPQENPFLEVSAPSEHFIE). The helical transmembrane segment at 1582 to 1602 (LILALIVTGILTILIILLCLI) threads the bilayer. The Cytoplasmic segment spans residues 1603 to 1634 (EICCHRRSLQEDEEGFSRDSEAPTEEESEALP). Positions 1614-1634 (DEEGFSRDSEAPTEEESEALP) are disordered. Over residues 1624–1634 (APTEEESEALP) the composition is skewed to acidic residues.

Belongs to the LRRC37A family.

Its subcellular location is the membrane. The sequence is that of Leucine-rich repeat-containing protein 37A3 (LRRC37A3) from Homo sapiens (Human).